Consider the following 1273-residue polypeptide: Clustered mitochondria protein homolog (1273 aa).

Residues 344-599 (PANNADYSRM…NTYPLDVKFA (256 aa)) enclose the Clu domain. TPR repeat units lie at residues 981–1013 (SDQK…KEEV), 1022–1055 (AEKY…YERV), and 1151–1184 (ATLE…FTRE). 2 disordered regions span residues 1217–1242 (AEQA…KAEL) and 1254–1273 (IEGG…KGKK). The segment covering 1262–1273 (SKKKSSKKKGKK) has biased composition (basic residues).

The protein belongs to the CLU family. May associate with the eukaryotic translation initiation factor 3 (eIF-3) complex.

The protein resides in the cytoplasm. Its function is as follows. mRNA-binding protein involved in proper cytoplasmic distribution of mitochondria. The chain is Clustered mitochondria protein homolog from Vanderwaltozyma polyspora (strain ATCC 22028 / DSM 70294 / BCRC 21397 / CBS 2163 / NBRC 10782 / NRRL Y-8283 / UCD 57-17) (Kluyveromyces polysporus).